Reading from the N-terminus, the 361-residue chain is Phospho-N-acetylmuramoyl-pentapeptide-transferase (361 aa).

The next 10 helical transmembrane spans lie at 25–45 (RGIL…PAVI), 73–93 (TMGG…WGDL), 98–118 (VWLV…DDWI), 139–159 (IFGL…AAIT), 168–188 (IALP…IVGF), 200–220 (GLAI…AYAS), 237–257 (AGEL…FLWF), 264–284 (VFMG…VAVI), 289–309 (LVLV…MIQV), and 339–359 (VIVR…ATLK).

The protein belongs to the glycosyltransferase 4 family. MraY subfamily. Mg(2+) serves as cofactor.

It localises to the cell inner membrane. The enzyme catalyses UDP-N-acetyl-alpha-D-muramoyl-L-alanyl-gamma-D-glutamyl-meso-2,6-diaminopimeloyl-D-alanyl-D-alanine + di-trans,octa-cis-undecaprenyl phosphate = di-trans,octa-cis-undecaprenyl diphospho-N-acetyl-alpha-D-muramoyl-L-alanyl-D-glutamyl-meso-2,6-diaminopimeloyl-D-alanyl-D-alanine + UMP. It functions in the pathway cell wall biogenesis; peptidoglycan biosynthesis. Its function is as follows. Catalyzes the initial step of the lipid cycle reactions in the biosynthesis of the cell wall peptidoglycan: transfers peptidoglycan precursor phospho-MurNAc-pentapeptide from UDP-MurNAc-pentapeptide onto the lipid carrier undecaprenyl phosphate, yielding undecaprenyl-pyrophosphoryl-MurNAc-pentapeptide, known as lipid I. This chain is Phospho-N-acetylmuramoyl-pentapeptide-transferase, found in Xanthomonas campestris pv. campestris (strain 8004).